Reading from the N-terminus, the 892-residue chain is Alanine--tRNA ligase (892 aa).

4 residues coordinate Zn(2+): His596, His600, Cys700, and His704.

Belongs to the class-II aminoacyl-tRNA synthetase family. The cofactor is Zn(2+).

It is found in the cytoplasm. It catalyses the reaction tRNA(Ala) + L-alanine + ATP = L-alanyl-tRNA(Ala) + AMP + diphosphate. Its function is as follows. Catalyzes the attachment of alanine to tRNA(Ala) in a two-step reaction: alanine is first activated by ATP to form Ala-AMP and then transferred to the acceptor end of tRNA(Ala). Also edits incorrectly charged Ser-tRNA(Ala) and Gly-tRNA(Ala) via its editing domain. This is Alanine--tRNA ligase from Methanococcus vannielii (strain ATCC 35089 / DSM 1224 / JCM 13029 / OCM 148 / SB).